The primary structure comprises 95 residues: Large ribosomal subunit protein bL27 (95 aa).

The tract at residues 1-24 is disordered; the sequence is MAHKKGTGSTRNGRDSNSQRLGVK. Polar residues predominate over residues 7–20; it reads TGSTRNGRDSNSQR.

The protein belongs to the bacterial ribosomal protein bL27 family.

This Trichodesmium erythraeum (strain IMS101) protein is Large ribosomal subunit protein bL27.